The following is a 754-amino-acid chain: LON peptidase N-terminal domain and RING finger protein 2 (754 aa).

2 TPR repeats span residues 23 to 58 (IAQRLEEGDEAFRAGDYEMAAELFRSMLAGLAQPDR) and 59 to 91 (GLCLRLGDALARAGRLPEALGAFRGAARLGALR). The interval 112 to 136 (PLSAENPGGEPEAPGEGGPAPEPRA) is disordered. Low complexity predominate over residues 115 to 125 (AENPGGEPEAP). TPR repeat units lie at residues 197–230 (LRRLAGQARSLQRQQQPEAALLRCDQALELAPDD), 231–264 (NSLLLLRAELYLTMKNYEQALQDASAACQNEPLL), and 266–298 (KGHQVKAQALSGLGRSKEVLKEFLYCLALNPEC). A disordered region spans residues 398–439 (GLKRQFPDDVEDAPDLNAPGKIPKKDLSLQRSPNSETEESQG). The segment covering 426-439 (LQRSPNSETEESQG) has biased composition (polar residues). One copy of the TPR 6 repeat lies at 447–483 (FECALCMRLLFEPVTTPCGHTFCLKCLERCLDHAPHC). The RING-type zinc finger occupies 449-487 (CALCMRLLFEPVTTPCGHTFCLKCLERCLDHAPHCPLCK). In terms of domain architecture, Lon N-terminal spans 528–737 (MSELSNLTRD…AIRRILVIIT (210 aa)).

The sequence is that of LON peptidase N-terminal domain and RING finger protein 2 (LONRF2) from Homo sapiens (Human).